The primary structure comprises 880 residues: Interference hedgehog (880 aa).

A signal peptide spans 1–20 (MTLLTSSLLLFSLLTSRLEA). Topologically, residues 21 to 703 (IPVLEKSPAH…ETFNMSPMLT (683 aa)) are extracellular. Ig-like C2-type domains follow at residues 45-142 (PGVR…TARL), 155-232 (PESP…ERIQ), 252-340 (PHLL…YIKV), and 346-432 (PQIV…LQVN). Intrachain disulfides connect Cys68–Cys126, Cys173–Cys220, Cys276–Cys324, and Cys367–Cys414. Asn102 and Asn209 each carry an N-linked (GlcNAc...) asparagine glycan. A disordered region spans residues 429–467 (LQVNPKQIQEPRESGGTHRPNPNQGSKHKQMYPPTPPNV). 2 Fibronectin type-III domains span residues 461–567 (PPTP…LQPG) and 575–670 (VPEL…TQRP). Asn466 carries N-linked (GlcNAc...) asparagine glycosylation. Positions 497, 501, 503, and 541 each coordinate heparin. An N-linked (GlcNAc...) asparagine glycan is attached at Asn557. A disordered region spans residues 662-692 (LKQGRTQRPKTSTTEEPTLQMGDRDTTTPSH). A compositionally biased stretch (polar residues) spans 665–678 (GRTQRPKTSTTEEP). N-linked (GlcNAc...) asparagine glycosylation is present at Asn693. Residues 704 to 724 (GTIGGGAVLILLLISTCLCVC) form a helical membrane-spanning segment. Over 725–880 (RRRNSRSRGN…SSGSLNSVGV (156 aa)) the chain is Cytoplasmic. Disordered regions lie at residues 728 to 762 (NSRS…QRQR) and 775 to 880 (QQQQ…SVGV). 2 stretches are compositionally biased toward low complexity: residues 823–837 (RAGG…NNNN) and 864–880 (SSRS…SVGV).

The protein belongs to the immunoglobulin superfamily. IHOG family. In terms of assembly, homodimer. Heterotetramer; 2 iHog chains bind 2 hh chains when facilitated by heparin, heparin is required to promote high-affinity interactions between hh and iHog.

The protein localises to the membrane. Its function is as follows. Mediates response to the active Hedgehog (Hh) protein signal in embryos, functioning upstream or at the level of patched (ptc). The chain is Interference hedgehog from Drosophila simulans (Fruit fly).